The primary structure comprises 424 residues: Probable methyltransferase EP424R (424 aa).

The Adrift-type SAM-dependent 2'-O-MTase domain maps to 104 to 316 (QIVTNAWLKM…TYIVGKNRLR (213 aa)). S-adenosyl-L-methionine is bound by residues glycine 136 and aspartate 229. The active-site Proton acceptor is lysine 269.

It localises to the virion. This African swine fever virus (strain Badajoz 1971 Vero-adapted) (Ba71V) protein is Probable methyltransferase EP424R.